We begin with the raw amino-acid sequence, 203 residues long: Small ribosomal subunit protein uS4 (203 aa).

The S4 RNA-binding domain occupies 93–156; it reads RRLDNVVYRL…MKVPAILEAV (64 aa).

This sequence belongs to the universal ribosomal protein uS4 family. Part of the 30S ribosomal subunit. Contacts protein S5. The interaction surface between S4 and S5 is involved in control of translational fidelity.

Functionally, one of the primary rRNA binding proteins, it binds directly to 16S rRNA where it nucleates assembly of the body of the 30S subunit. In terms of biological role, with S5 and S12 plays an important role in translational accuracy. The protein is Small ribosomal subunit protein uS4 of Streptococcus equi subsp. equi (strain 4047).